The following is a 920-amino-acid chain: MCVVRTFWFAVLTVIFAVSCSSHSVIENDKPTSLKVGEGFVNPLGYYEASPRFSWKPSISNSKSTQQSAYQIQVSSTPEGLLTNPDKWDSEKIKSSAMSWVQYKGKKITSREKVFWRVRFWDENNIASQWSDVAHIEMGLLENLDWKASWIGAKDTESSLSPSQSTLATPQYLRTQFSVEKEVLEARLYVTAKGVFKVYLNGKDITANDALPPGWTPYEKRIETLTYDVTTLITKRDNALGAIIAGGWYSGRIADLKETDHSKPPRFLAQLEITYSDNTTRLVTTNDSWKATQSGPIRFASNYDGERYDETYEMQGWSMPDYDDSEWGTVITDASTPGTLLRPKRHLPVRNVDKLTPLSFKQVSKDTVIFDFGQNMVGVPSIKLPVKQGKQVTLRFAEALHKGDFYTDNYRSAHSTDYFLPAKDGIAEYTPTFTFHGFRFVEISGFDETKAPVKNWIVANVQHSDIDLYNNFLSANPKLNKLFENINWGLKGNFFDIPLDCPQRDERLGWTGDANAFIAPSMYMADVYGFWSAYLNSLREEQTEDGFVPLYVPFVKWINWTSSGWGDAATILPWELYMMTGDQKILEDSYPSMKSWINYHDSQAKNNISSMMTFGDWLQPYPEAEGKGANRGDTDFSLISTAFFARSVALTRKTALELGFNEDAKRYEVKQKTLAKAFRAEFFDEDLNVIKGKETQTAYLLALAFDLLPQSEVNIAQTKLISLLQSADTHLRTGFLGTPLLADVLQEAGRTDLVYELLFKETYPSWFYSINNGATTTWERWNSYSLEEGFNPQGMNSLNHYAYGTISRWFYEGILGVKPQLPGFKKAIISPQLTSKLGFAEGSIPTPSGDIDVSWTMTSDGFDVSVTVPFNISAEFVPPAHYSVVAATNAKNEPIKKWKGLKAGQYQFQLIIDEKHGGAQ.

Residues 1–19 (MCVVRTFWFAVLTVIFAVS) form the signal peptide. Cysteine 20 carries N-palmitoyl cysteine lipidation. Cysteine 20 is lipidated: S-diacylglycerol cysteine. Alpha-L-rhamnose contacts are provided by residues aspartate 500, 504 to 506 (RDE), aspartate 513, and tryptophan 565. The active-site Proton donor is glutamate 506. Glutamate 779 functions as the Proton acceptor in the catalytic mechanism. Alpha-L-rhamnose is bound at residue histidine 800.

It belongs to the glycosyl hydrolase 78 family.

It is found in the cell membrane. It catalyses the reaction Hydrolysis of terminal non-reducing alpha-L-rhamnose residues in alpha-L-rhamnosides.. Its function is as follows. Alpha-L-rhamnosidase involved in ulvan degradation. Ulvan is the main polysaccharide component of the Ulvales (green seaweed) cell wall. It is composed of disaccharide building blocks comprising 3-sulfated rhamnose (Rha3S) linked to D-glucuronic acid (GlcA), L-iduronic acid (IduA), or D-xylose (Xyl). The enzyme is able to degrade p-nitrophenyl-alpha-L-rhamnopyranoside (PNP-Rha) in vitro. Incubating the enzyme with the products obtained after degradation with ulvan lyase and beta-glucuronyl hydrolase (i.e. the trisaccharides beta-alpha-L-Rha3S-IduA-Rha3S and beta-alpha-L-Rha3S-GlcA-Rha3S) showed no degradation, suggesting that the enzyme is active on neutral rhamnose and that desulfation of the oligosaccharide must be achieved before cleavage of rhamnose. This chain is Alpha-L-rhamnosidase, found in Alteromonas sp. (strain LOR).